The following is a 169-amino-acid chain: Phosphopantetheine adenylyltransferase (169 aa).

T14 serves as a coordination point for substrate. Residues 14–15 (TF) and H22 contribute to the ATP site. Residues K46, L78, and R92 each contribute to the substrate site. Residues 93-95 (GLR), E103, and 128-134 (HSFISSS) each bind ATP.

Belongs to the bacterial CoaD family. Homohexamer. Requires Mg(2+) as cofactor.

It localises to the cytoplasm. It carries out the reaction (R)-4'-phosphopantetheine + ATP + H(+) = 3'-dephospho-CoA + diphosphate. It functions in the pathway cofactor biosynthesis; coenzyme A biosynthesis; CoA from (R)-pantothenate: step 4/5. Functionally, reversibly transfers an adenylyl group from ATP to 4'-phosphopantetheine, yielding dephospho-CoA (dPCoA) and pyrophosphate. This is Phosphopantetheine adenylyltransferase from Stenotrophomonas maltophilia (strain K279a).